A 630-amino-acid polypeptide reads, in one-letter code: DNA mismatch repair protein MutL (630 aa).

Disordered regions lie at residues 361 to 386 (VLSS…APAE) and 407 to 431 (FERK…GQAE). Residues 407-421 (FERKQEEEVGEERCS) show a composition bias toward basic and acidic residues.

This sequence belongs to the DNA mismatch repair MutL/HexB family.

Its function is as follows. This protein is involved in the repair of mismatches in DNA. It is required for dam-dependent methyl-directed DNA mismatch repair. May act as a 'molecular matchmaker', a protein that promotes the formation of a stable complex between two or more DNA-binding proteins in an ATP-dependent manner without itself being part of a final effector complex. The sequence is that of DNA mismatch repair protein MutL from Geobacillus kaustophilus (strain HTA426).